Reading from the N-terminus, the 454-residue chain is Bifunctional protein GlmU (454 aa).

Positions 1 to 226 (MALNVVILAA…AIEVEGANNR (226 aa)) are pyrophosphorylase. UDP-N-acetyl-alpha-D-glucosamine-binding positions include 8–11 (LAAG), lysine 22, glutamine 73, 78–79 (GT), 100–102 (YGD), glycine 137, glutamate 151, asparagine 166, and asparagine 224. Aspartate 102 contributes to the Mg(2+) binding site. Mg(2+) is bound at residue asparagine 224. The tract at residues 227-247 (VQLAQLERAYQAREAEKLMLA) is linker. Residues 248–454 (GANLRDPHRI…DWKRPVKIKK (207 aa)) form an N-acetyltransferase region. Positions 330 and 348 each coordinate UDP-N-acetyl-alpha-D-glucosamine. Histidine 360 functions as the Proton acceptor in the catalytic mechanism. UDP-N-acetyl-alpha-D-glucosamine-binding residues include tyrosine 363 and asparagine 374. Residues alanine 377, 383-384 (NY), serine 402, alanine 420, and arginine 437 contribute to the acetyl-CoA site.

This sequence in the N-terminal section; belongs to the N-acetylglucosamine-1-phosphate uridyltransferase family. It in the C-terminal section; belongs to the transferase hexapeptide repeat family. Homotrimer. It depends on Mg(2+) as a cofactor.

It localises to the cytoplasm. It carries out the reaction alpha-D-glucosamine 1-phosphate + acetyl-CoA = N-acetyl-alpha-D-glucosamine 1-phosphate + CoA + H(+). The catalysed reaction is N-acetyl-alpha-D-glucosamine 1-phosphate + UTP + H(+) = UDP-N-acetyl-alpha-D-glucosamine + diphosphate. It participates in nucleotide-sugar biosynthesis; UDP-N-acetyl-alpha-D-glucosamine biosynthesis; N-acetyl-alpha-D-glucosamine 1-phosphate from alpha-D-glucosamine 6-phosphate (route II): step 2/2. The protein operates within nucleotide-sugar biosynthesis; UDP-N-acetyl-alpha-D-glucosamine biosynthesis; UDP-N-acetyl-alpha-D-glucosamine from N-acetyl-alpha-D-glucosamine 1-phosphate: step 1/1. It functions in the pathway bacterial outer membrane biogenesis; LPS lipid A biosynthesis. Its function is as follows. Catalyzes the last two sequential reactions in the de novo biosynthetic pathway for UDP-N-acetylglucosamine (UDP-GlcNAc). The C-terminal domain catalyzes the transfer of acetyl group from acetyl coenzyme A to glucosamine-1-phosphate (GlcN-1-P) to produce N-acetylglucosamine-1-phosphate (GlcNAc-1-P), which is converted into UDP-GlcNAc by the transfer of uridine 5-monophosphate (from uridine 5-triphosphate), a reaction catalyzed by the N-terminal domain. In Shewanella putrefaciens (strain CN-32 / ATCC BAA-453), this protein is Bifunctional protein GlmU.